Consider the following 116-residue polypeptide: Carbohydrate-binding protein AQN-3 (116 aa).

A disulfide bond links cysteine 9 and cysteine 30. Residues 9–110 (CGGFLKNYSG…SSFNVYFYGI (102 aa)) enclose the CUB domain. The N-linked (GlcNAc...) asparagine glycan is linked to asparagine 50. Residues cysteine 53 and cysteine 74 are joined by a disulfide bond. Histidine 85 carries the post-translational modification Methylhistidine.

This sequence belongs to the spermadhesin family. In terms of processing, the residue at position 85 was identified as a methylhistidine by mass spectrometry.

It is found in the secreted. Its function is as follows. AQN proteins mediate the binding of boar spermatozoa to component(s) of the egg's zona pellucida by a carbohydrate-binding mechanism. AQN proteins are secretory components of the male accessory glands being coated to the sperm surface at the time of ejaculation. They possess as well heparin-, serine-protease-inhibitor-binding capability. The protein is Carbohydrate-binding protein AQN-3 of Sus scrofa (Pig).